We begin with the raw amino-acid sequence, 998 residues long: DNA damage-induced apoptosis suppressor protein (998 aa).

Residues 815 to 834 (DKQQASPSCPKNIKTPSQKI) are disordered. A compositionally biased stretch (polar residues) spans 817–834 (QQASPSCPKNIKTPSQKI).

Highly expressed in colorectal and lung cancer tissues.

It is found in the cytoplasm. The protein resides in the nucleus. In terms of biological role, may be an anti-apoptotic protein involved in DNA repair or cell survival. This chain is DNA damage-induced apoptosis suppressor protein (DDIAS), found in Homo sapiens (Human).